A 593-amino-acid chain; its full sequence is 2-succinyl-5-enolpyruvyl-6-hydroxy-3-cyclohexene-1-carboxylate synthase (593 aa).

This sequence belongs to the TPP enzyme family. MenD subfamily. Homodimer. It depends on Mg(2+) as a cofactor. Mn(2+) serves as cofactor. Requires thiamine diphosphate as cofactor.

It catalyses the reaction isochorismate + 2-oxoglutarate + H(+) = 5-enolpyruvoyl-6-hydroxy-2-succinyl-cyclohex-3-ene-1-carboxylate + CO2. The protein operates within quinol/quinone metabolism; 1,4-dihydroxy-2-naphthoate biosynthesis; 1,4-dihydroxy-2-naphthoate from chorismate: step 2/7. Its pathway is quinol/quinone metabolism; menaquinone biosynthesis. In terms of biological role, catalyzes the thiamine diphosphate-dependent decarboxylation of 2-oxoglutarate and the subsequent addition of the resulting succinic semialdehyde-thiamine pyrophosphate anion to isochorismate to yield 2-succinyl-5-enolpyruvyl-6-hydroxy-3-cyclohexene-1-carboxylate (SEPHCHC). The chain is 2-succinyl-5-enolpyruvyl-6-hydroxy-3-cyclohexene-1-carboxylate synthase from Pelodictyon phaeoclathratiforme (strain DSM 5477 / BU-1).